Reading from the N-terminus, the 381-residue chain is MRLDDPVSLACRLMSYPSVTPDRSGAIPFLAELLSDLGFRCEILSFGNGDVEVKNLYAQYGNGHPNLCFAGHTDVVPPGGTWRTDPFSPQVKDGMLYGRGASDMKAAICAYISAVARLDSVPGCLSFLITGDEEGRWREYGTKSVLDWMTKNGICPDYCVLGEPSSRKRLGDCISIGRRGSLNFELSCRGVQGHVAYPELAHNPIDDVLCILRKIKDTTLDSGTDHFPPSHCEITSIDVGNDVENLIPSSATAAFNIRFNDLHTAESLYRDMDAICASVTSNYTLSHRCFGGASISQPSCYTATLCEVVKEVTGLDARLITDGGTSDACIISSFCPVAELGLPSGTAHKVDECVSVADVLTLAEIYHRFINRFFAVAQSRS.

Histidine 72 provides a ligand contact to Zn(2+). Aspartate 74 is a catalytic residue. Aspartate 103 lines the Zn(2+) pocket. Glutamate 133 acts as the Proton acceptor in catalysis. Residues glutamate 134, glutamate 163, and histidine 348 each contribute to the Zn(2+) site.

It belongs to the peptidase M20A family. DapE subfamily. In terms of assembly, homodimer. Zn(2+) is required as a cofactor. Requires Co(2+) as cofactor.

The catalysed reaction is N-succinyl-(2S,6S)-2,6-diaminopimelate + H2O = (2S,6S)-2,6-diaminopimelate + succinate. The protein operates within amino-acid biosynthesis; L-lysine biosynthesis via DAP pathway; LL-2,6-diaminopimelate from (S)-tetrahydrodipicolinate (succinylase route): step 3/3. In terms of biological role, catalyzes the hydrolysis of N-succinyl-L,L-diaminopimelic acid (SDAP), forming succinate and LL-2,6-diaminopimelate (DAP), an intermediate involved in the bacterial biosynthesis of lysine and meso-diaminopimelic acid, an essential component of bacterial cell walls. This is Succinyl-diaminopimelate desuccinylase from Anaplasma marginale (strain Florida).